The chain runs to 190 residues: Cytoglobin (190 aa).

Positions 18 to 167 (ELSEAERKAV…IYSHVTAAYK (150 aa)) constitute a Globin domain. Cysteine 38 and cysteine 83 form a disulfide bridge. 2 residues coordinate heme b: histidine 81 and histidine 113.

It belongs to the globin family. As to quaternary structure, monomeric. Homodimer; disulfide-linked in vitro. Also homooligomeric in vitro. Post-translationally, the formation of an intramolecular disulfide bond between cysteines Cys-38 and Cys-83 specifically enhances the nitrite reductase activity. Widely expressed. Highest expression in heart, stomach, bladder and small intestine.

The protein resides in the cytoplasm. The protein localises to the nucleus. It catalyses the reaction Fe(II)-heme b-[protein] + nitric oxide + O2 = Fe(III)-heme b-[protein] + nitrate. The catalysed reaction is Fe(III)-heme b-[protein] + nitric oxide + H2O = Fe(II)-heme b-[protein] + nitrite + 2 H(+). The enzyme catalyses 2 superoxide + 2 H(+) = H2O2 + O2. It carries out the reaction H2O2 + AH2 = A + 2 H2O. The nitric oxide dioxygenase activity is activated by a reducing system composed of cytochrome b5, its upstream reductase CYB5R3 and NADH. Functionally, probable multifunctional globin with a hexacoordinated heme iron required for the catalysis of various reactions depending on redox condition of the cell as well as oxygen availability. Has a nitric oxide dioxygenase (NOD) activity and is most probably involved in cell-mediated and oxygen-dependent nitric oxide consumption. By scavenging this second messenger may regulate several biological processes including endothelium-mediated vasodilation and vascular tone. Under normoxic conditions functions as a nitric oxide dioxygenase (NOD) but under hypoxic conditions the globin may switch its function to that of a nitrite (NO2) reductase (NiR), generating nitric oxide. Could also have peroxidase and superoxide dismutase activities, detoxifying reactive oxygen species and protecting cells against oxidative stress. Also binds dioxygen with low affinity and could function as an oxygen sensor but has probably no function as a respiratory oxygen carrier. The chain is Cytoglobin from Homo sapiens (Human).